The chain runs to 440 residues: Thymidine phosphorylase (440 aa).

Belongs to the thymidine/pyrimidine-nucleoside phosphorylase family. As to quaternary structure, homodimer.

It catalyses the reaction thymidine + phosphate = 2-deoxy-alpha-D-ribose 1-phosphate + thymine. It participates in pyrimidine metabolism; dTMP biosynthesis via salvage pathway; dTMP from thymine: step 1/2. The enzymes which catalyze the reversible phosphorolysis of pyrimidine nucleosides are involved in the degradation of these compounds and in their utilization as carbon and energy sources, or in the rescue of pyrimidine bases for nucleotide synthesis. The protein is Thymidine phosphorylase of Yersinia enterocolitica serotype O:8 / biotype 1B (strain NCTC 13174 / 8081).